The chain runs to 292 residues: F-box protein SKIP28 (292 aa).

One can recognise an F-box; degenerate domain in the interval 21-79 (LIVLPYLHSLFELLSMIRVSRSLRDAIRDETALWTKLVIEPPLSSRLTDDILSEFSSKS).

Part of a SCF (ASK-cullin-F-box) protein ligase complex. Interacts with SKP1A/ASK1 and CUL1.

The protein operates within protein modification; protein ubiquitination. Functionally, component of SCF(ASK-cullin-F-box) E3 ubiquitin ligase complexes, which may mediate the ubiquitination and subsequent proteasomal degradation of target proteins. Required during the endosperm development in embryos. The polypeptide is F-box protein SKIP28 (SKIP28) (Arabidopsis thaliana (Mouse-ear cress)).